The sequence spans 226 residues: Ribosomal RNA large subunit methyltransferase E (226 aa).

Residues glycine 82, tryptophan 84, aspartate 100, aspartate 116, and aspartate 140 each coordinate S-adenosyl-L-methionine. Lysine 180 functions as the Proton acceptor in the catalytic mechanism.

Belongs to the class I-like SAM-binding methyltransferase superfamily. RNA methyltransferase RlmE family.

The protein resides in the cytoplasm. It catalyses the reaction uridine(2552) in 23S rRNA + S-adenosyl-L-methionine = 2'-O-methyluridine(2552) in 23S rRNA + S-adenosyl-L-homocysteine + H(+). In terms of biological role, specifically methylates the uridine in position 2552 of 23S rRNA at the 2'-O position of the ribose in the fully assembled 50S ribosomal subunit. The sequence is that of Ribosomal RNA large subunit methyltransferase E from Caulobacter sp. (strain K31).